The chain runs to 232 residues: Lipopolysaccharide core heptose(II) kinase WaaY (232 aa).

The protein belongs to the protein kinase superfamily. RfaY/WaaY family.

The catalysed reaction is alpha-D-Glc-(1-&gt;3)-[L-alpha-D-Hep-(1-&gt;7)]-L-alpha-D-Hep-(1-&gt;3)-4-O-PO3(2-)-L-alpha-D-Hep-(1-&gt;5)-[alpha-Kdo-(2-&gt;4)]-alpha-Kdo-(2-&gt;6)-lipid A + ATP = alpha-D-Glc-(1-&gt;3)-[L-alpha-D-Hep-(1-&gt;7)]-4-O-PO3(2-)-L-alpha-D-Hep-(1-&gt;3)-4-O-PO3(2-)-L-alpha-D-Hep-(1-&gt;5)-[alpha-Kdo-(2-&gt;4)]-alpha-Kdo-(2-&gt;6)-lipid A + ADP + H(+). The protein operates within bacterial outer membrane biogenesis; LPS core biosynthesis. In terms of biological role, kinase involved in the biosynthesis of the core oligosaccharide region of lipopolysaccharide (LPS). Catalyzes the phosphorylation of the second heptose unit (HepII) of the inner core. The sequence is that of Lipopolysaccharide core heptose(II) kinase WaaY from Escherichia coli (strain K12).